The primary structure comprises 482 residues: UDP-N-acetylmuramate--L-alanine ligase (482 aa).

Residue 123-129 (GTHGKTT) coordinates ATP.

This sequence belongs to the MurCDEF family.

It localises to the cytoplasm. The enzyme catalyses UDP-N-acetyl-alpha-D-muramate + L-alanine + ATP = UDP-N-acetyl-alpha-D-muramoyl-L-alanine + ADP + phosphate + H(+). It participates in cell wall biogenesis; peptidoglycan biosynthesis. Cell wall formation. The chain is UDP-N-acetylmuramate--L-alanine ligase from Pseudomonas putida (strain W619).